Here is a 500-residue protein sequence, read N- to C-terminus: Zinc finger protein ENHYDROUS (500 aa).

A disordered region spans residues 1–42; the sequence is MPVDLDNSSTVSGDASVSSTGNQNLTPKSVGKKKRNLPGMPD. The span at 8–21 shows a compositional bias: low complexity; sequence SSTVSGDASVSSTG. Residue S51 is modified to Phosphoserine. 2 C2H2-type zinc fingers span residues 61 to 83 and 102 to 132; these read FVCE…RRGH and YVCP…CRKH. Residues 124 to 131 carry the Nuclear localization signal motif; that stretch reads IKKHFCRK. A C2H2-type 2; degenerate zinc finger spans residues 137-160; the sequence is WKCEKCSKKYAVQSDWKAHSKICG. Residues C139, C142, H155, C159, C166, C168, H181, and C185 each contribute to the Zn(2+) site. A CCHC-type 2; atypical zinc finger spans residues 164–187; that stretch reads YKCDCGTLFSRRDSFITHRAFCDA. The tract at residues 174 to 186 is SHR-binding; sequence RRDSFITHRAFCD. Residues 196–236 form a disordered region; sequence HTQSKKLYPETVTRKNPEIEQKSPAAVESSPSLPPSSPPSV. Residues 207–216 show a composition bias toward basic and acidic residues; sequence VTRKNPEIEQ.

As to quaternary structure, interacts with the DELLA proteins (e.g. GAI/RGA2, RGA, RGL1, RGL2 and RGLG3), acting as coactivators. In terms of tissue distribution, at 3 days post anthesis (DPA), expressed in the chalazal endosperm region. By 6 DPA, expressed in the endosperm and embryo. In fully germinated seed, strongest expression in the root tip and not detected in the cotyledons. In 4-days old seedlings, restricted to the vasculature of the cotyledons, the shoot apical meristem region, and the root tip. By 8 days, restricted to newly emerged leaves.

Its subcellular location is the nucleus. Transcription factor promoting the transition to germination by regulating light and hormonal signaling during seed maturation. Acts as a positive regulator of phytochrome and/or gibberellin action. The sequence is that of Zinc finger protein ENHYDROUS from Arabidopsis thaliana (Mouse-ear cress).